The primary structure comprises 369 residues: 4-hydroxy-3-methylbut-2-en-1-yl diphosphate synthase (flavodoxin) (369 aa).

[4Fe-4S] cluster is bound by residues cysteine 270, cysteine 273, cysteine 305, and glutamate 312.

This sequence belongs to the IspG family. [4Fe-4S] cluster is required as a cofactor.

It catalyses the reaction (2E)-4-hydroxy-3-methylbut-2-enyl diphosphate + oxidized [flavodoxin] + H2O + 2 H(+) = 2-C-methyl-D-erythritol 2,4-cyclic diphosphate + reduced [flavodoxin]. The protein operates within isoprenoid biosynthesis; isopentenyl diphosphate biosynthesis via DXP pathway; isopentenyl diphosphate from 1-deoxy-D-xylulose 5-phosphate: step 5/6. Its function is as follows. Converts 2C-methyl-D-erythritol 2,4-cyclodiphosphate (ME-2,4cPP) into 1-hydroxy-2-methyl-2-(E)-butenyl 4-diphosphate. In Pseudomonas savastanoi pv. phaseolicola (strain 1448A / Race 6) (Pseudomonas syringae pv. phaseolicola (strain 1448A / Race 6)), this protein is 4-hydroxy-3-methylbut-2-en-1-yl diphosphate synthase (flavodoxin).